We begin with the raw amino-acid sequence, 357 residues long: Queuosine-tRNA galactosyltransferase (357 aa).

It belongs to the glycosyltransferase 2 family.

The protein localises to the cytoplasm. The enzyme catalyses queuosine(34) in tRNA(Tyr) + UDP-alpha-D-galactose = O-5''-beta-D-galactosylqueuosine(34) in tRNA(Tyr) + UDP + H(+). Its function is as follows. Glycosyltransferase that specifically catalyzes galactosylation of cytoplasmic tRNA(Tyr) modified with queuosine at position 34 (queuosine(34)). Galactosylates the cyclopentene hydroxyl group of queuosine(34) in tRNA(Tyr) to form galactosyl-queuosine(34). Mannosylation of queuosine(34) in tRNA(Tyr) is required to slow-down elongation at cognate codons UAC and suppress stop codon readthrough, thereby regulating protein translation. The chain is Queuosine-tRNA galactosyltransferase from Mus musculus (Mouse).